The primary structure comprises 314 residues: Ornithine carbamoyltransferase (314 aa).

Carbamoyl phosphate contacts are provided by residues 61–64 (STRT), Gln-88, Arg-112, and 139–142 (HPCQ). Residues Asn-170, Asp-234, and 238–239 (SM) contribute to the L-ornithine site. Carbamoyl phosphate is bound by residues 274-275 (CL) and Arg-302.

It belongs to the aspartate/ornithine carbamoyltransferase superfamily. OTCase family.

It is found in the cytoplasm. It catalyses the reaction carbamoyl phosphate + L-ornithine = L-citrulline + phosphate + H(+). It functions in the pathway amino-acid biosynthesis; L-arginine biosynthesis; L-arginine from L-ornithine and carbamoyl phosphate: step 1/3. Functionally, reversibly catalyzes the transfer of the carbamoyl group from carbamoyl phosphate (CP) to the N(epsilon) atom of ornithine (ORN) to produce L-citrulline. This is Ornithine carbamoyltransferase from Anoxybacillus flavithermus (strain DSM 21510 / WK1).